The primary structure comprises 603 residues: Chaperone protein DnaK (603 aa).

Phosphothreonine; by autocatalysis is present on T175. The segment covering 573–586 (AQQAQQQNPDNQNN) has biased composition (low complexity). The segment at 573-603 (AQQAQQQNPDNQNNNKDDVTEATVTDDSTKK) is disordered. A compositionally biased stretch (polar residues) spans 594-603 (ATVTDDSTKK).

The protein belongs to the heat shock protein 70 family.

In terms of biological role, acts as a chaperone. The chain is Chaperone protein DnaK from Ureaplasma parvum serovar 3 (strain ATCC 27815 / 27 / NCTC 11736).